Here is a 547-residue protein sequence, read N- to C-terminus: Apolipoprotein N-acyltransferase (547 aa).

A run of 6 helical transmembrane segments spans residues 31 to 51 (PLPAWSLAPVQVIALAVAAHA), 65 to 85 (GWLFAMFSFSLGLYWLYVSMH), 89 to 109 (GLAAPLAAAGVLALSAFLALF), 144 to 164 (AACWAALEWLRAVVLTGFPWL), 181 to 201 (LLGVHGMALLAAFAAAALAGL), and 215 to 235 (LAAGVALLLAGAGWLLGQFSW). Residues 248–511 (VQGNVEQSQK…AGVLPVAVQG (264 aa)) enclose the CN hydrolase domain. Glu292 acts as the Proton acceptor in catalysis. The active site involves Lys366. Cys416 (nucleophile) is an active-site residue.

The protein belongs to the CN hydrolase family. Apolipoprotein N-acyltransferase subfamily.

The protein localises to the cell inner membrane. The enzyme catalyses N-terminal S-1,2-diacyl-sn-glyceryl-L-cysteinyl-[lipoprotein] + a glycerophospholipid = N-acyl-S-1,2-diacyl-sn-glyceryl-L-cysteinyl-[lipoprotein] + a 2-acyl-sn-glycero-3-phospholipid + H(+). It functions in the pathway protein modification; lipoprotein biosynthesis (N-acyl transfer). In terms of biological role, catalyzes the phospholipid dependent N-acylation of the N-terminal cysteine of apolipoprotein, the last step in lipoprotein maturation. In Bordetella bronchiseptica (strain ATCC BAA-588 / NCTC 13252 / RB50) (Alcaligenes bronchisepticus), this protein is Apolipoprotein N-acyltransferase.